Consider the following 508-residue polypeptide: Cyclin-A1-1 (508 aa).

Over residues 1-28 the composition is skewed to low complexity; it reads MSSNLAASRRSSSSSSVAAAAAAKRPAV. 2 disordered regions span residues 1 to 40 and 82 to 125; these read MSSNLAASRRSSSSSSVAAAAAAKRPAVGEGGGGGGGKAA and VKKG…ESVL. Residues 29 to 39 are compositionally biased toward gly residues; it reads GEGGGGGGGKA. The span at 98–111 shows a compositional bias: low complexity; the sequence is ASAVKSASAKPAPA.

This sequence belongs to the cyclin family. Cyclin AB subfamily. As to expression, expressed in the dividing region of the root cap and root apex. Expressed in the intercalary meristem of internodes and in adventitious roots under submergence conditions.

Its function is as follows. Involved in the control of the cell cycle at the G2/M (mitosis) transition. The sequence is that of Cyclin-A1-1 (CYCA1-1) from Oryza sativa subsp. japonica (Rice).